A 273-amino-acid chain; its full sequence is Holocytochrome c-type synthase (273 aa).

A compositionally biased stretch (low complexity) spans methionine 1–proline 18. The interval methionine 1–arginine 39 is disordered. HRM repeat units follow at residues glutamate 30–glutamine 35 and glycine 40–methionine 45.

Belongs to the cytochrome c-type heme lyase family.

It localises to the mitochondrion inner membrane. The enzyme catalyses holo-[cytochrome c] = apo-[cytochrome c] + heme b. In terms of biological role, lyase that catalyzes the covalent linking of the heme group to the cytochrome C apoprotein to produce the mature functional cytochrome. The chain is Holocytochrome c-type synthase (HCCS) from Gallus gallus (Chicken).